We begin with the raw amino-acid sequence, 77 residues long: Putative defensin-like protein 160 (77 aa).

The signal sequence occupies residues 1–24; sequence MAKLSCSYFFILMLVFSALLMVEC. 4 cysteine pairs are disulfide-bonded: C30–C77, C40–C59, C45–C71, and C49–C73.

This sequence belongs to the DEFL family.

It is found in the secreted. The chain is Putative defensin-like protein 160 (LCR26) from Arabidopsis thaliana (Mouse-ear cress).